The following is a 1087-amino-acid chain: Kinesin-like protein KIN-14F (1087 aa).

The Calponin-homology (CH) domain occupies 1–110 (MDQGAMETLP…CILCLKGFYE (110 aa)). A disordered region spans residues 136-155 (SSPPQYGIGSESTTDESVSL). Residues 377 to 705 (TIRVYCRVRP…LKFAQRVASI (329 aa)) enclose the Kinesin motor domain. Residue 461 to 468 (GQTGSGKT) coordinates ATP. A coiled-coil region spans residues 710–749 (ARSNKETGEIRDLKDEISSLKSAMEKKEAELEQLRSGSIR). Disordered stretches follow at residues 740–858 (LEQL…PVSR), 923–949 (QGGV…FQKL), and 1004–1087 (DSTL…FMVP). Polar residues-rich tracts occupy residues 744–754 (RSGSIRNTTEC), 780–797 (PQPN…CSTG), and 836–856 (TDRA…NLPV). Residues 1017–1033 (EPPSKSKNAQRNSSKNS) are compositionally biased toward polar residues. Over residues 1042-1054 (YAHEDTSLVDDKP) the composition is skewed to basic and acidic residues. Basic residues predominate over residues 1076–1087 (SRSTHHARFMVP).

It belongs to the TRAFAC class myosin-kinesin ATPase superfamily. Kinesin family. KIN-14 subfamily. As to quaternary structure, interacts (via C-terminus) with VDAC3. In terms of tissue distribution, expressed in roots, leaves, stems and flowers (at protein level).

The protein resides in the cytoplasm. The protein localises to the cytoskeleton. It localises to the mitochondrion. Required for keeping the ATP levels stable and balancing the aerobic respiration pathways during seed germination at low temperature. The sequence is that of Kinesin-like protein KIN-14F from Arabidopsis thaliana (Mouse-ear cress).